We begin with the raw amino-acid sequence, 103 residues long: MTEQNELQRLRAELDALDGTLLDTVRRRIDLGVRIARYKSRHGVPMMQPGRVSLVKDRAARYAADHGLDESFLVNLYDVIITEMCRVEDLVMSRESLTAEDRR.

The 92-residue stretch at 1-92 folds into the Chorismate mutase domain; sequence MTEQNELQRL…EMCRVEDLVM (92 aa).

It carries out the reaction 4-amino-4-deoxychorismate = 4-amino-4-deoxyprephenate. It participates in antibiotic biosynthesis. Functionally, involved in chloramphenicol biosynthesis. Probably catalyzes the conversion of 4-amino-4-deoxychorismate to 4-amino-4-deoxyprephenate. The sequence is that of 4-amino-4-deoxychorismate mutase from Streptomyces venezuelae (strain ATCC 10712 / CBS 650.69 / DSM 40230 / JCM 4526 / NBRC 13096 / PD 04745).